Here is a 165-residue protein sequence, read N- to C-terminus: Trypsin alpha-3 (165 aa).

The region spanning 1 to 163 (NSGGVLVSVA…LRSWVVSAAN (163 aa)) is the Peptidase S1 domain. Residue D26 is the Charge relay system of the active site. 2 cysteine pairs are disulfide-bonded: C89/C106 and C115/C139. The active-site Charge relay system is S119.

The protein belongs to the peptidase S1 family.

The protein localises to the secreted. The protein resides in the extracellular space. The enzyme catalyses Preferential cleavage: Arg-|-Xaa, Lys-|-Xaa.. The polypeptide is Trypsin alpha-3 (Lucilia cuprina (Green bottle fly)).